Here is a 282-residue protein sequence, read N- to C-terminus: Centromere protein P (282 aa).

Residues 1 to 80 (MEQKYEEDIQ…KDLRRQTEIN (80 aa)) are a coiled coil.

It belongs to the CENP-P/CTF19 family.

The protein resides in the nucleus. Its subcellular location is the chromosome. It is found in the centromere. Probable component of a centromeric complex involved in assembly of kinetochore proteins, mitotic progression and chromosome segregation. This Danio rerio (Zebrafish) protein is Centromere protein P (cenpp).